An 876-amino-acid chain; its full sequence is Probable LRR receptor-like protein kinase At1g51890 (876 aa).

The N-terminal stretch at 1–19 (MRFLSFLIFVFAVLGLVQA) is a signal peptide. Residues 20–500 (QDQSGFISLD…TGKNSTNVVA (481 aa)) lie on the Extracellular side of the membrane. Asn-45, Asn-90, Asn-138, Asn-177, Asn-251, Asn-259, Asn-284, Asn-290, Asn-327, Asn-335, Asn-397, Asn-412, and Asn-417 each carry an N-linked (GlcNAc...) asparagine glycan. 3 LRR repeats span residues 407-430 (QIISLNLSGSNLSGTITSDISKLT), 431-453 (HLRELDLSNNDLSGDIPFVFSDM), and 455-476 (NLTLINLSGNKNLNRSVPETLQ). Residues Asn-455, Asn-460, Asn-468, Asn-481, and Asn-494 are each glycosylated (N-linked (GlcNAc...) asparagine). The chain crosses the membrane as a helical span at residues 501–521 (IAASVASVFAVLVILAIVFVV). Residues 522 to 872 (IRKKQRTNEA…FSPSSASDFS (351 aa)) lie on the Cytoplasmic side of the membrane. Thr-561 bears the Phosphothreonine mark. Residues 570–842 (KNFERVLGKG…HVVMELNECL (273 aa)) form the Protein kinase domain. ATP-binding positions include 576–584 (LGKGGFGTV) and Lys-597. At Tyr-642 the chain carries Phosphotyrosine. Asp-694 acts as the Proton acceptor in catalysis. A phosphothreonine mark is found at Thr-729 and Thr-734. Tyr-742 is subject to Phosphotyrosine.

It belongs to the protein kinase superfamily. Ser/Thr protein kinase family.

The protein localises to the cell membrane. The enzyme catalyses L-seryl-[protein] + ATP = O-phospho-L-seryl-[protein] + ADP + H(+). The catalysed reaction is L-threonyl-[protein] + ATP = O-phospho-L-threonyl-[protein] + ADP + H(+). The polypeptide is Probable LRR receptor-like protein kinase At1g51890 (Arabidopsis thaliana (Mouse-ear cress)).